We begin with the raw amino-acid sequence, 1076 residues long: Bifunctional glutamine synthetase adenylyltransferase/adenylyl-removing enzyme (1076 aa).

Residues 1–521 (MESSMFKPSS…LHLDIYYRPM (521 aa)) are adenylyl removase. Positions 524–1076 (VNAQMENDQI…LERNRRRAQR (553 aa)) are adenylyl transferase. Over residues 1041–1056 (ATATASAATPQPQTAP) the composition is skewed to low complexity. Positions 1041–1076 (ATATASAATPQPQTAPRPRMHVIAPRLERNRRRAQR) are disordered.

Belongs to the GlnE family. Requires Mg(2+) as cofactor.

It catalyses the reaction [glutamine synthetase]-O(4)-(5'-adenylyl)-L-tyrosine + phosphate = [glutamine synthetase]-L-tyrosine + ADP. The enzyme catalyses [glutamine synthetase]-L-tyrosine + ATP = [glutamine synthetase]-O(4)-(5'-adenylyl)-L-tyrosine + diphosphate. Functionally, involved in the regulation of glutamine synthetase GlnA, a key enzyme in the process to assimilate ammonia. When cellular nitrogen levels are high, the C-terminal adenylyl transferase (AT) inactivates GlnA by covalent transfer of an adenylyl group from ATP to specific tyrosine residue of GlnA, thus reducing its activity. Conversely, when nitrogen levels are low, the N-terminal adenylyl removase (AR) activates GlnA by removing the adenylyl group by phosphorolysis, increasing its activity. The regulatory region of GlnE binds the signal transduction protein PII (GlnB) which indicates the nitrogen status of the cell. The protein is Bifunctional glutamine synthetase adenylyltransferase/adenylyl-removing enzyme of Bifidobacterium longum subsp. infantis (strain ATCC 15697 / DSM 20088 / JCM 1222 / NCTC 11817 / S12).